A 986-amino-acid chain; its full sequence is P3N-PIPO polyprotein (986 aa).

One can recognise a Peptidase S30 domain in the interval 141 to 284 (KLTEGQMNHL…QSILNSMIQF (144 aa)). Catalysis depends on for P1 proteinase activity residues His-192, Asp-201, and Ser-235. The Involved in interaction with stylet and aphid transmission signature appears at 334 to 337 (KITC). The Involved in virions binding and aphid transmission signature appears at 592–594 (PTK). Residues 618–740 (LYIAKQGYCY…ESDIKHYRVG (123 aa)) enclose the Peptidase C6 domain. Catalysis depends on for helper component proteinase activity residues Cys-626 and His-699.

This sequence belongs to the potyviridae P3N-PIPO polyprotein family. Interacts (via PIPO domain) with host PCaP1 protein; this interaction may help to anchor the movement complex to the plasma membrane from which the complex could move to the plasmodesmata. Potyviral RNA is expressed as two polyproteins which undergo post-translational proteolytic processing. Genome polyprotein is processed by NIa-pro, P1 and HC-pro proteinases resulting in the production of at least ten individual proteins. P3N-PIPO is cleaved by P1 and HC-pro proteinases resulting in the production of three individual proteins. The P1 proteinase and the HC-pro cleave only their respective C-termini autocatalytically.

Its subcellular location is the host cell junction. It localises to the host plasmodesma. It carries out the reaction Hydrolyzes a Gly-|-Gly bond at its own C-terminus, commonly in the sequence -Tyr-Xaa-Val-Gly-|-Gly, in the processing of the potyviral polyprotein.. Functionally, required for aphid transmission and also has proteolytic activity. Only cleaves a Gly-Gly dipeptide at its own C-terminus. Interacts with virions and aphid stylets. Acts as a suppressor of RNA-mediated gene silencing, also known as post-transcriptional gene silencing (PTGS), a mechanism of plant viral defense that limits the accumulation of viral RNAs. May have RNA-binding activity. In terms of biological role, allows efficient cell to cell propagation, by bypassing the host cell wall barrier. Transports viral genome to neighboring plant cells directly through plasmosdesmata, without any budding. This is P3N-PIPO polyprotein from Potato virus Y (strain N) (PVY).